The following is a 488-amino-acid chain: Alpha,alpha-trehalose-phosphate synthase [UDP-forming] 56 kDa subunit (488 aa).

D-glucose 6-phosphate contacts are provided by Tyr102 and Asp156. Positions 293 and 298 each coordinate UDP. The UDP-alpha-D-glucose site is built by Arg293 and Lys298. D-glucose 6-phosphate is bound at residue Arg331. Residues Ile370 and 396-400 (LVSYE) each bind UDP. Residues Ile370 and 392-400 (DGMNLVSYE) contribute to the UDP-alpha-D-glucose site.

Belongs to the glycosyltransferase 20 family. In terms of assembly, trehalose synthase/phosphatase complex contains three or four polypeptides of 56 kDa (TPS1), 102 kDa (TPS2), 115 kDa (TPS3) and 123 kDa (TSL1).

It carries out the reaction D-glucose 6-phosphate + UDP-alpha-D-glucose = alpha,alpha-trehalose 6-phosphate + UDP + H(+). It functions in the pathway carbohydrate biosynthesis. Functionally, synthase catalytic subunit of the trehalose synthase complex that catalyzes the production of trehalose from glucose-6-phosphate and UDP-alpha-D-glucose in a two step process. Can function independently of the complex. The polypeptide is Alpha,alpha-trehalose-phosphate synthase [UDP-forming] 56 kDa subunit (Kluyveromyces lactis (strain ATCC 8585 / CBS 2359 / DSM 70799 / NBRC 1267 / NRRL Y-1140 / WM37) (Yeast)).